We begin with the raw amino-acid sequence, 87 residues long: Acylphosphatase (87 aa).

Positions 1-87 (MAWVHGRVQG…EDYQDFRIRY (87 aa)) constitute an Acylphosphatase-like domain. Catalysis depends on residues Arg14 and Asn32.

This sequence belongs to the acylphosphatase family.

It catalyses the reaction an acyl phosphate + H2O = a carboxylate + phosphate + H(+). The protein is Acylphosphatase (acyP) of Cronobacter sakazakii (strain ATCC BAA-894) (Enterobacter sakazakii).